Reading from the N-terminus, the 500-residue chain is E3 ubiquitin-protein ligase TRIM69 (500 aa).

Residues 1-22 (MEVSSRPPSNFDPGNYVEMSDP) are disordered. Residues 1–153 (MEVSSRPPSN…SMGQSKDFLQ (153 aa)) are necessary for nuclear localization. The segment at 42 to 83 (CPLCNDWFRDPLMLTCGHNFCQDCIQSFWKVHSKETFCPDCK) adopts an RING-type zinc-finger fold. Positions 217–256 (NKEKDILNDLRDEGKLLNEEMEVNLNQIQEQCLVAKDMLA) form a coiled coil. Residues 306 to 500 (PIQYIIWKEM…KEPLHIVHPQ (195 aa)) form the B30.2/SPRY domain. Residue Ser342 is modified to Phosphoserine.

Belongs to the TRIM/RBCC family. In terms of assembly, homo-multimer; required for antiviral activity. Interacts with PML. Post-translationally, phosphorylated. Phosphorylation is necessary for nuclear localization. Expressed in spermatid.

The protein resides in the cytoplasm. Its subcellular location is the nucleus. The protein localises to the nucleus speckle. It localises to the cytoskeleton. It is found in the microtubule organizing center. The protein resides in the centrosome. It catalyses the reaction S-ubiquitinyl-[E2 ubiquitin-conjugating enzyme]-L-cysteine + [acceptor protein]-L-lysine = [E2 ubiquitin-conjugating enzyme]-L-cysteine + N(6)-ubiquitinyl-[acceptor protein]-L-lysine.. The protein operates within protein modification; protein ubiquitination. E3 ubiquitin ligase that plays an important role in antiviral immunity by restricting different viral infections including dengue virus or vesicular stomatitis indiana virus. Ubiquitinates viral proteins such as dengue virus NS3 thereby limiting infection. In addition, acts as a key mediator of type I interferon induced microtubule stabilization by directly associating to microtubules independently of its E3 ligase activity. Also plays a role in cataract formation together with TP53. Mechanistically, inhibits UVB-induced cell apoptosis and reactive oxygen species (ROS) production by inducing TP53 ubiquitination. Regulates centrosome dynamics and mitotic progression by ubiquitinating STK3/MST2; leading to its redistribution to the perinuclear cytoskeleton and subsequent phosphorylation by PLK1. The sequence is that of E3 ubiquitin-protein ligase TRIM69 (Trim69) from Mus musculus (Mouse).